A 271-amino-acid polypeptide reads, in one-letter code: MKRYVFMLSDGTGITAETLGNSLITQFENIQFEKITIPYIDSTHRAESVVLRINQCFSEQGTKPLVFMTLVDPEIRQAIKKAHACVFDLFSIFIGPLENELEEKSSYTVGRTHGVANVKSYSHRIEAIDFALSHDDGIKTRGYDKADIILIGVSRCGKTPSCLYMALQYGILAANYPFTEEDLVGFRLPEVLRPYKPKLFGLTIDAQRLQQIRSERRPNSKYASAEQCRLEVTEVEAMYQRENIPYINSTKYSIEEISTKVLAIAGLQRKI.

Residue 152–159 participates in ADP binding; that stretch reads GVSRCGKT.

The protein belongs to the pyruvate, phosphate/water dikinase regulatory protein family. PSRP subfamily.

The catalysed reaction is [pyruvate, water dikinase] + ADP = [pyruvate, water dikinase]-phosphate + AMP + H(+). It catalyses the reaction [pyruvate, water dikinase]-phosphate + phosphate + H(+) = [pyruvate, water dikinase] + diphosphate. In terms of biological role, bifunctional serine/threonine kinase and phosphorylase involved in the regulation of the phosphoenolpyruvate synthase (PEPS) by catalyzing its phosphorylation/dephosphorylation. In Legionella pneumophila (strain Paris), this protein is Putative phosphoenolpyruvate synthase regulatory protein.